The sequence spans 76 residues: Accessory gland-specific peptide 57Dc (76 aa).

Positions 1–20 are cleaved as a signal peptide; sequence MHGTHFLILLLLCGVLGSNG.

In terms of processing, cAMP-dependent phosphorylation. Lumen fluid of male accessory glands, becomes seminal fluid.

It is found in the secreted. Functionally, transferred from male to female during mating and may affect egglaying and behavior after mating. The polypeptide is Accessory gland-specific peptide 57Dc (Mst57Dc) (Drosophila melanogaster (Fruit fly)).